A 338-amino-acid chain; its full sequence is Anthranilate phosphoribosyltransferase (338 aa).

5-phospho-alpha-D-ribose 1-diphosphate contacts are provided by residues G83, 86–87 (GD), S91, 93–96 (NCST), 111–119 (KHGNRAVSS), and A123. G83 is an anthranilate binding site. S95 contacts Mg(2+). Position 114 (N114) interacts with anthranilate. R169 contacts anthranilate. Residues D228 and E229 each contribute to the Mg(2+) site.

Belongs to the anthranilate phosphoribosyltransferase family. As to quaternary structure, homodimer. Mg(2+) is required as a cofactor.

The enzyme catalyses N-(5-phospho-beta-D-ribosyl)anthranilate + diphosphate = 5-phospho-alpha-D-ribose 1-diphosphate + anthranilate. Its pathway is amino-acid biosynthesis; L-tryptophan biosynthesis; L-tryptophan from chorismate: step 2/5. Its function is as follows. Catalyzes the transfer of the phosphoribosyl group of 5-phosphorylribose-1-pyrophosphate (PRPP) to anthranilate to yield N-(5'-phosphoribosyl)-anthranilate (PRA). In Nitratidesulfovibrio vulgaris (strain DSM 19637 / Miyazaki F) (Desulfovibrio vulgaris), this protein is Anthranilate phosphoribosyltransferase.